The following is a 264-amino-acid chain: 3-methyl-2-oxobutanoate hydroxymethyltransferase (264 aa).

The Mg(2+) site is built by D44 and D83. Residues 44-45 (DS), D83, and K112 each bind 3-methyl-2-oxobutanoate. E114 is a binding site for Mg(2+). The active-site Proton acceptor is E181.

This sequence belongs to the PanB family. In terms of assembly, homodecamer; pentamer of dimers. Mg(2+) is required as a cofactor.

Its subcellular location is the cytoplasm. The enzyme catalyses 3-methyl-2-oxobutanoate + (6R)-5,10-methylene-5,6,7,8-tetrahydrofolate + H2O = 2-dehydropantoate + (6S)-5,6,7,8-tetrahydrofolate. It participates in cofactor biosynthesis; coenzyme A biosynthesis. Catalyzes the reversible reaction in which hydroxymethyl group from 5,10-methylenetetrahydrofolate is transferred onto alpha-ketoisovalerate to form ketopantoate. The chain is 3-methyl-2-oxobutanoate hydroxymethyltransferase from Pyrobaculum arsenaticum (strain DSM 13514 / JCM 11321 / PZ6).